An 864-amino-acid chain; its full sequence is Alanine--tRNA ligase (864 aa).

The Zn(2+) site is built by His-534, His-538, Cys-639, and His-643.

Belongs to the class-II aminoacyl-tRNA synthetase family. Requires Zn(2+) as cofactor.

It is found in the cytoplasm. The enzyme catalyses tRNA(Ala) + L-alanine + ATP = L-alanyl-tRNA(Ala) + AMP + diphosphate. Functionally, catalyzes the attachment of alanine to tRNA(Ala) in a two-step reaction: alanine is first activated by ATP to form Ala-AMP and then transferred to the acceptor end of tRNA(Ala). Also edits incorrectly charged Ser-tRNA(Ala) and Gly-tRNA(Ala) via its editing domain. The sequence is that of Alanine--tRNA ligase from Onion yellows phytoplasma (strain OY-M).